Consider the following 61-residue polypeptide: Small ribosomal subunit protein uS14 (61 aa).

Zn(2+) is bound by residues cysteine 24, cysteine 27, cysteine 40, and cysteine 43.

It belongs to the universal ribosomal protein uS14 family. Zinc-binding uS14 subfamily. As to quaternary structure, part of the 30S ribosomal subunit. Contacts proteins S3 and S10. Requires Zn(2+) as cofactor.

Functionally, binds 16S rRNA, required for the assembly of 30S particles and may also be responsible for determining the conformation of the 16S rRNA at the A site. The protein is Small ribosomal subunit protein uS14 of Borrelia hermsii (strain HS1 / DAH).